We begin with the raw amino-acid sequence, 948 residues long: Bifunctional uridylyltransferase/uridylyl-removing enzyme (948 aa).

The tract at residues 1–372 (METHHIDFST…RFANRSRKIP (372 aa)) is uridylyltransferase. Residues 373 to 728 (GTVEFVEDRG…VRTDSFHAIT (356 aa)) form a uridylyl-removing region. The 117-residue stretch at 489–605 (VDEHLIRAVE…IDFADRVQSL (117 aa)) folds into the HD domain. 2 consecutive ACT domains span residues 729-810 (EITV…EVIA) and 840-921 (VIEV…ERMP).

Belongs to the GlnD family. The cofactor is Mg(2+).

The enzyme catalyses [protein-PII]-L-tyrosine + UTP = [protein-PII]-uridylyl-L-tyrosine + diphosphate. It catalyses the reaction [protein-PII]-uridylyl-L-tyrosine + H2O = [protein-PII]-L-tyrosine + UMP + H(+). Its activity is regulated as follows. Uridylyltransferase (UTase) activity is inhibited by glutamine, while glutamine activates uridylyl-removing (UR) activity. Functionally, modifies, by uridylylation and deuridylylation, the PII regulatory proteins (GlnB and homologs), in response to the nitrogen status of the cell that GlnD senses through the glutamine level. Under low glutamine levels, catalyzes the conversion of the PII proteins and UTP to PII-UMP and PPi, while under higher glutamine levels, GlnD hydrolyzes PII-UMP to PII and UMP (deuridylylation). Thus, controls uridylylation state and activity of the PII proteins, and plays an important role in the regulation of nitrogen fixation and metabolism. This Rhizobium tropici protein is Bifunctional uridylyltransferase/uridylyl-removing enzyme.